Reading from the N-terminus, the 348-residue chain is Ion-translocating oxidoreductase complex subunit D (348 aa).

A run of 3 helical transmembrane segments spans residues 20–39 (VMRLTLLALVPGIAAQCYLF), 67–87 (YVVSASLKDSSALLTAALIAV), and 124–144 (AMVGYVLLLVSFPAPMTNWMA). Thr-187 is modified (FMN phosphoryl threonine). 4 consecutive transmembrane segments (helical) span residues 221-241 (WINLSFLAGGILLFMLRLIPW), 244-264 (PVAMLGTLAAASALAHYLAPA), 266-286 (FAMPEIELLSGATMLGAFFII), and 300-320 (LVFGALVGGLVFIIRHFGGYP).

It belongs to the NqrB/RnfD family. As to quaternary structure, the complex is composed of six subunits: RnfA, RnfB, RnfC, RnfD, RnfE and RnfG. Requires FMN as cofactor.

Its subcellular location is the cell inner membrane. Its function is as follows. Part of a membrane-bound complex that couples electron transfer with translocation of ions across the membrane. This Tolumonas auensis (strain DSM 9187 / NBRC 110442 / TA 4) protein is Ion-translocating oxidoreductase complex subunit D.